The sequence spans 619 residues: MPKLRSATSTEGRNMAGARALWRATGMKDNDFGKPIIAIANSYTQFVPGHVHLKDMGDLVASAIAEAGGISKEFNTIAVDDGIAMGHGGMLYSLPSRELIADSVEYMVNAHCADALVCISNCDKITPGMLMAALRLNIPVVFVSGGPMEAGKTKLSDKIIKLDLVDAMVAAADSSVSEEDSAKIERSACPTCGSCSGMFTANSMNCLTEALGLSLPGNGSMLATHSDRRELFLEAGRRVMALTKRYYHDDDETALPRNIASFKAFENATALDIAMGGSSNTVLHLLAAAQEAEVDFTMADIDRISRKVPHLCKVAPSTPKYHMEDVHRAGGVMSILGELDRADLLHTDVPHVAADSGENLSHVLARYDLVQTQDENVRRFFSAGPAGIPTTKAFSQSCRWPSVDDDRQNGCIRSREFAFSQEGGLAVLSGNIAPKGCIVKTAGVDEDNLTFVGRARVYESQDDAVAGILGGEVVAGDVVVIRYEGPKGGPGMQEMLYPTSYLKSRGLGAQCALITDGRFSGGTSGLSIGHVSPEAASGGAIALIEQGDEIVIDIPARTIVLNVSDSELEARRQAMDAKGVLGWKPLNRQRYVSLALKAYALLATSADMGAVRDRTLLEG.

Residue aspartate 81 coordinates Mg(2+). Cysteine 122 provides a ligand contact to [2Fe-2S] cluster. Mg(2+) contacts are provided by aspartate 123 and lysine 124. Lysine 124 bears the N6-carboxylysine mark. Cysteine 195 is a [2Fe-2S] cluster binding site. Glutamate 494 contributes to the Mg(2+) binding site. Serine 520 serves as the catalytic Proton acceptor.

Belongs to the IlvD/Edd family. As to quaternary structure, homodimer. It depends on [2Fe-2S] cluster as a cofactor. Mg(2+) serves as cofactor.

It carries out the reaction (2R)-2,3-dihydroxy-3-methylbutanoate = 3-methyl-2-oxobutanoate + H2O. The catalysed reaction is (2R,3R)-2,3-dihydroxy-3-methylpentanoate = (S)-3-methyl-2-oxopentanoate + H2O. It functions in the pathway amino-acid biosynthesis; L-isoleucine biosynthesis; L-isoleucine from 2-oxobutanoate: step 3/4. It participates in amino-acid biosynthesis; L-valine biosynthesis; L-valine from pyruvate: step 3/4. In terms of biological role, functions in the biosynthesis of branched-chain amino acids. Catalyzes the dehydration of (2R,3R)-2,3-dihydroxy-3-methylpentanoate (2,3-dihydroxy-3-methylvalerate) into 2-oxo-3-methylpentanoate (2-oxo-3-methylvalerate) and of (2R)-2,3-dihydroxy-3-methylbutanoate (2,3-dihydroxyisovalerate) into 2-oxo-3-methylbutanoate (2-oxoisovalerate), the penultimate precursor to L-isoleucine and L-valine, respectively. In Shewanella denitrificans (strain OS217 / ATCC BAA-1090 / DSM 15013), this protein is Dihydroxy-acid dehydratase.